The primary structure comprises 273 residues: Undecaprenyl-diphosphatase (273 aa).

The next 9 helical transmembrane spans lie at 1–21, 39–59, 63–83, 92–112, 118–138, 165–185, 195–215, 225–245, and 252–272; these read MEPI…FLPV, PALF…LIVF, LGMM…GIAP, LKLA…GLGL, LFFS…LLWL, GLAV…GLFL, FSFL…AVDL, ATVL…KVLI, and RFYL…WIGM.

This sequence belongs to the UppP family.

The protein resides in the cell inner membrane. It catalyses the reaction di-trans,octa-cis-undecaprenyl diphosphate + H2O = di-trans,octa-cis-undecaprenyl phosphate + phosphate + H(+). Functionally, catalyzes the dephosphorylation of undecaprenyl diphosphate (UPP). Confers resistance to bacitracin. This chain is Undecaprenyl-diphosphatase, found in Desulfosudis oleivorans (strain DSM 6200 / JCM 39069 / Hxd3) (Desulfococcus oleovorans).